The primary structure comprises 299 residues: Bifunctional protein FolD (299 aa).

NADP(+) is bound by residues 169-171, Ser-194, and Ile-235; that span reads GRS.

Belongs to the tetrahydrofolate dehydrogenase/cyclohydrolase family. In terms of assembly, homodimer.

The catalysed reaction is (6R)-5,10-methylene-5,6,7,8-tetrahydrofolate + NADP(+) = (6R)-5,10-methenyltetrahydrofolate + NADPH. The enzyme catalyses (6R)-5,10-methenyltetrahydrofolate + H2O = (6R)-10-formyltetrahydrofolate + H(+). Its pathway is one-carbon metabolism; tetrahydrofolate interconversion. In terms of biological role, catalyzes the oxidation of 5,10-methylenetetrahydrofolate to 5,10-methenyltetrahydrofolate and then the hydrolysis of 5,10-methenyltetrahydrofolate to 10-formyltetrahydrofolate. The sequence is that of Bifunctional protein FolD from Nostoc sp. (strain PCC 7120 / SAG 25.82 / UTEX 2576).